A 129-amino-acid polypeptide reads, in one-letter code: Glycine cleavage system H protein (129 aa).

A Lipoyl-binding domain is found at 24–106 (TYTVGITEHA…YAGGWIFKIK (83 aa)). K65 is subject to N6-lipoyllysine.

It belongs to the GcvH family. As to quaternary structure, the glycine cleavage system is composed of four proteins: P, T, L and H. (R)-lipoate serves as cofactor.

In terms of biological role, the glycine cleavage system catalyzes the degradation of glycine. The H protein shuttles the methylamine group of glycine from the P protein to the T protein. The sequence is that of Glycine cleavage system H protein from Citrobacter koseri (strain ATCC BAA-895 / CDC 4225-83 / SGSC4696).